A 219-amino-acid chain; its full sequence is 2-hydroxy-3-keto-5-methylthiopentenyl-1-phosphate phosphatase (219 aa).

Belongs to the HAD-like hydrolase superfamily. MtnX family.

It carries out the reaction 2-hydroxy-5-methylsulfanyl-3-oxopent-1-enyl phosphate + H2O = 1,2-dihydroxy-5-(methylsulfanyl)pent-1-en-3-one + phosphate. The protein operates within amino-acid biosynthesis; L-methionine biosynthesis via salvage pathway; L-methionine from S-methyl-5-thio-alpha-D-ribose 1-phosphate: step 4/6. Dephosphorylates 2-hydroxy-3-keto-5-methylthiopentenyl-1-phosphate (HK-MTPenyl-1-P) yielding 1,2-dihydroxy-3-keto-5-methylthiopentene (DHK-MTPene). The polypeptide is 2-hydroxy-3-keto-5-methylthiopentenyl-1-phosphate phosphatase (Bacillus cereus (strain 03BB102)).